The following is a 76-amino-acid chain: uncharacterized protein (76 aa).

In terms of domain architecture, HTH cro/C1-type spans 6–60; the sequence is LKKNRLEKGFTQEEVAKAAQIGRAYYTMIENGTRKPSVIVSKKIGEKLGFDWTIF. The H-T-H motif DNA-binding region spans 17–36; the sequence is QEEVAKAAQIGRAYYTMIEN.

This is an uncharacterized protein from Bacillus subtilis (strain 168).